Consider the following 445-residue polypeptide: MAQFFKAKPNTSKQLSSKLSLKVTQLDHLGAGIAHHDGKIVFINGALPGETVSVQLTEQKKKFARAKLLKIDKASAQRVSPLCPHFDKCGGCDLQHLDIDAQRKHKASTLVDLVNKFAQTQAGEVCDTLSDNAWHYRRRARLATWFDKNTKHISLGFRASSSSDVVEIQSCAVLAEPLSALIPDLAFMLNQLSGKKALGHVELTQADNGNFVVLRVTKALSDKDKARLVEFANKHQVIVLLQDDDAQCEHLNGAGEQPYYGFDDNQVKLNFSPGNFIQVNAQVNQAMVSQAVEWLSPKADERVLDLFCGIGNFSLPLAKDGAEVIGVEGVQAMVEQARINAKQSGLDKVSFYHADLSADLSKEPWLGKVDKMLIDPARAGAYESMQSLKKLKPKALVYVSCNPASLARDSEVILKQGYQLKKIGLVDMFPQTHHLESMALFELKN.

Residues S12–K70 enclose the TRAM domain. [4Fe-4S] cluster contacts are provided by C83, C89, C92, and C171. Positions 278, 307, 312, 328, 355, and 375 each coordinate S-adenosyl-L-methionine. The active-site Nucleophile is C401.

It belongs to the class I-like SAM-binding methyltransferase superfamily. RNA M5U methyltransferase family. RlmD subfamily.

The catalysed reaction is uridine(1939) in 23S rRNA + S-adenosyl-L-methionine = 5-methyluridine(1939) in 23S rRNA + S-adenosyl-L-homocysteine + H(+). Catalyzes the formation of 5-methyl-uridine at position 1939 (m5U1939) in 23S rRNA. The chain is 23S rRNA (uracil(1939)-C(5))-methyltransferase RlmD from Shewanella halifaxensis (strain HAW-EB4).